Reading from the N-terminus, the 258-residue chain is Imidazole glycerol phosphate synthase subunit HisF (258 aa).

Active-site residues include Asp11 and Asp130.

Belongs to the HisA/HisF family. Heterodimer of HisH and HisF.

It is found in the cytoplasm. The enzyme catalyses 5-[(5-phospho-1-deoxy-D-ribulos-1-ylimino)methylamino]-1-(5-phospho-beta-D-ribosyl)imidazole-4-carboxamide + L-glutamine = D-erythro-1-(imidazol-4-yl)glycerol 3-phosphate + 5-amino-1-(5-phospho-beta-D-ribosyl)imidazole-4-carboxamide + L-glutamate + H(+). It participates in amino-acid biosynthesis; L-histidine biosynthesis; L-histidine from 5-phospho-alpha-D-ribose 1-diphosphate: step 5/9. Functionally, IGPS catalyzes the conversion of PRFAR and glutamine to IGP, AICAR and glutamate. The HisF subunit catalyzes the cyclization activity that produces IGP and AICAR from PRFAR using the ammonia provided by the HisH subunit. This Prochlorococcus marinus (strain MIT 9211) protein is Imidazole glycerol phosphate synthase subunit HisF.